The sequence spans 194 residues: uncharacterized protein (194 aa).

The N-terminal stretch at 1–22 (MNKVTKTAIAGLLALFAGNAAA) is a signal peptide. Cysteine 38 and cysteine 78 are joined by a disulfide.

Belongs to the fimbrial protein family.

It localises to the fimbrium. Functionally, part of the yraHIJK fimbrial operon. Could contribute to adhesion to various surfaces in specific environmental niches. Increases adhesion to eukaryotic T24 bladder epithelial cells in the absence of fim operon. This is an uncharacterized protein from Escherichia coli (strain K12).